Consider the following 166-residue polypeptide: Phosphopantetheine adenylyltransferase (166 aa).

S11 contributes to the substrate binding site. ATP-binding positions include 11-12 and H19; that span reads SF. Residues K43, A76, and R90 each coordinate substrate. Residues 91–93, E101, and 126–132 contribute to the ATP site; these read GLR and LQPISSS.

Belongs to the bacterial CoaD family. In terms of assembly, homohexamer. It depends on Mg(2+) as a cofactor.

Its subcellular location is the cytoplasm. The enzyme catalyses (R)-4'-phosphopantetheine + ATP + H(+) = 3'-dephospho-CoA + diphosphate. It participates in cofactor biosynthesis; coenzyme A biosynthesis; CoA from (R)-pantothenate: step 4/5. Reversibly transfers an adenylyl group from ATP to 4'-phosphopantetheine, yielding dephospho-CoA (dPCoA) and pyrophosphate. This chain is Phosphopantetheine adenylyltransferase, found in Streptococcus equi subsp. zooepidemicus (strain MGCS10565).